We begin with the raw amino-acid sequence, 125 residues long: Large ribosomal subunit protein bL19 (125 aa).

It belongs to the bacterial ribosomal protein bL19 family.

Its function is as follows. This protein is located at the 30S-50S ribosomal subunit interface and may play a role in the structure and function of the aminoacyl-tRNA binding site. The protein is Large ribosomal subunit protein bL19 of Wolbachia pipientis wMel.